Here is a 146-residue protein sequence, read N- to C-terminus: Hemoglobin subunit beta (146 aa).

N-acetylvaline is present on V1. Residues H2–H146 form the Globin domain. At T12 the chain carries Phosphothreonine. S44 carries the post-translational modification Phosphoserine. H63 contributes to the heme b binding site. The residue at position 82 (K82) is an N6-acetyllysine. H92 serves as a coordination point for heme b. C93 bears the S-nitrosocysteine mark. Residue K144 is modified to N6-acetyllysine.

It belongs to the globin family. In terms of assembly, heterotetramer of two alpha chains and two beta chains. Red blood cells.

Functionally, involved in oxygen transport from the lung to the various peripheral tissues. The sequence is that of Hemoglobin subunit beta (HBB) from Tursiops truncatus (Atlantic bottle-nosed dolphin).